A 324-amino-acid polypeptide reads, in one-letter code: o-succinylbenzoate synthase (324 aa).

Lys-135 acts as the Proton donor in catalysis. Residues Asp-163, Glu-192, and Asp-215 each contribute to the Mg(2+) site. Lys-237 acts as the Proton acceptor in catalysis.

Belongs to the mandelate racemase/muconate lactonizing enzyme family. MenC type 1 subfamily. A divalent metal cation serves as cofactor.

It catalyses the reaction (1R,6R)-6-hydroxy-2-succinyl-cyclohexa-2,4-diene-1-carboxylate = 2-succinylbenzoate + H2O. It functions in the pathway quinol/quinone metabolism; 1,4-dihydroxy-2-naphthoate biosynthesis; 1,4-dihydroxy-2-naphthoate from chorismate: step 4/7. It participates in quinol/quinone metabolism; menaquinone biosynthesis. Functionally, converts 2-succinyl-6-hydroxy-2,4-cyclohexadiene-1-carboxylate (SHCHC) to 2-succinylbenzoate (OSB). The polypeptide is o-succinylbenzoate synthase (Aliivibrio salmonicida (strain LFI1238) (Vibrio salmonicida (strain LFI1238))).